A 373-amino-acid polypeptide reads, in one-letter code: Putative glutamate--cysteine ligase 2 (373 aa).

Belongs to the glutamate--cysteine ligase type 2 family. YbdK subfamily. In terms of assembly, homodimer.

The enzyme catalyses L-cysteine + L-glutamate + ATP = gamma-L-glutamyl-L-cysteine + ADP + phosphate + H(+). Functionally, ATP-dependent carboxylate-amine ligase which exhibits weak glutamate--cysteine ligase activity. The protein is Putative glutamate--cysteine ligase 2 of Enterobacter sp. (strain 638).